The primary structure comprises 212 residues: Urease accessory protein UreG (212 aa).

GTP is bound at residue 11–18; it reads GPVGSGKT.

It belongs to the SIMIBI class G3E GTPase family. UreG subfamily. Homodimer. UreD, UreF and UreG form a complex that acts as a GTP-hydrolysis-dependent molecular chaperone, activating the urease apoprotein by helping to assemble the nickel containing metallocenter of UreC. The UreE protein probably delivers the nickel.

The protein resides in the cytoplasm. Facilitates the functional incorporation of the urease nickel metallocenter. This process requires GTP hydrolysis, probably effectuated by UreG. The protein is Urease accessory protein UreG of Trichodesmium erythraeum (strain IMS101).